Consider the following 689-residue polypeptide: Protein-glutamine gamma-glutamyltransferase 2 (689 aa).

Active-site residues include Cys278, His336, and Asp359. 5 residues coordinate Ca(2+): Asn399, Asp401, Glu437, Glu447, and Glu452. A disordered region spans residues 427–453; it reads STKSVGRDSREDITHTYKYPEGSEKER. The segment covering 431–441 has biased composition (basic and acidic residues); it reads VGRDSREDITH. 476–483 provides a ligand contact to GTP; the sequence is RIKLSEGA. Glu539 lines the Ca(2+) pocket. 580–583 serves as a coordination point for GTP; it reads RDVY.

This sequence belongs to the transglutaminase superfamily. Transglutaminase family. In terms of assembly, monomer. Requires Ca(2+) as cofactor. Predominates in mature erythrocytes. Also found in kidney and cardiac muscle.

Its subcellular location is the cytoplasm. The protein resides in the cytosol. It is found in the nucleus. The protein localises to the chromosome. It localises to the secreted. Its subcellular location is the extracellular space. The protein resides in the extracellular matrix. It is found in the cell membrane. The protein localises to the mitochondrion. The catalysed reaction is L-glutaminyl-[protein] + L-lysyl-[protein] = [protein]-L-lysyl-N(6)-5-L-glutamyl-[protein] + NH4(+). The enzyme catalyses L-glutaminyl-[protein] + serotonin = 5-serotonyl-L-glutamyl-[protein] + NH4(+). It catalyses the reaction L-glutaminyl-[protein] + dopamine = 5-dopaminyl-L-glutamyl-[protein] + NH4(+). It carries out the reaction L-glutaminyl-[protein] + histamine = 5-histaminyl-L-glutamyl-[protein] + NH4(+). The catalysed reaction is L-glutaminyl-[protein] + (R)-noradrenaline = 5-(R)-noradrenalinyl-L-glutamyl-[protein] + NH4(+). The enzyme catalyses L-glutaminyl-[protein] + H2O = L-glutamyl-[protein] + NH4(+). Acyltransferase activity is regulated by the binding of GTP and Ca(2+): inactivated by GTP, which stabilizes its closed structure, thereby obstructing the accessibility of substrates to the active sites. In contrast, Ca(2+) acts as a cofactor by inducing conformational change to the active open form. In absence of Ca(2+), Mg(2+) may bind Ca(2+)-binding sites, promoting GTP-binding and subsequent inhibition of the acyltransferase activity. Its function is as follows. Calcium-dependent acyltransferase that catalyzes the formation of covalent bonds between peptide-bound glutamine and various primary amines, such as gamma-amino group of peptide-bound lysine, or mono- and polyamines, thereby producing cross-linked or aminated proteins, respectively. Involved in many biological processes, such as bone development, angiogenesis, wound healing, cellular differentiation, chromatin modification and apoptosis. Acts as a protein-glutamine gamma-glutamyltransferase by mediating the cross-linking of proteins: under physiological conditions, the protein cross-linking activity is inhibited by GTP; inhibition is relieved by Ca(2+) in response to various stresses. When secreted, catalyzes cross-linking of proteins of the extracellular matrix, resulting in the formation of scaffolds. Plays a key role during apoptosis, both by (1) promoting the cross-linking of cytoskeletal proteins resulting in condensation of the cytoplasm, and by (2) mediating cross-linking proteins of the extracellular matrix, resulting in the irreversible formation of scaffolds that stabilize the integrity of the dying cells before their clearance by phagocytosis, thereby preventing the leakage of harmful intracellular components. In addition to protein cross-linking, can use different monoamine substrates to catalyze a vast array of protein post-translational modifications: mediates aminylation of serotonin, dopamine, noradrenaline or histamine into glutamine residues of target proteins to generate protein serotonylation, dopaminylation, noradrenalinylation or histaminylation, respectively. Mediates protein serotonylation of small GTPases during activation and aggregation of platelets, leading to constitutive activation of these GTPases. Plays a key role in chromatin organization by mediating serotonylation and dopaminylation of histone H3. Catalyzes serotonylation of 'Gln-5' of histone H3 (H3Q5ser) during serotonergic neuron differentiation, thereby facilitating transcription. Acts as a mediator of neurotransmission-independent role of nuclear dopamine in ventral tegmental area (VTA) neurons: catalyzes dopaminylation of 'Gln-5' of histone H3 (H3Q5dop), thereby regulating relapse-related transcriptional plasticity in the reward system. Also acts as a protein deamidase by mediating the side chain deamidation of specific glutamine residues of proteins to glutamate. May also act as an isopeptidase cleaving the previously formed cross-links. Also able to participate in signaling pathways independently of its acyltransferase activity: acts as a signal transducer in alpha-1 adrenergic receptor-mediated stimulation of phospholipase C-delta (PLCD) activity and is required for coupling alpha-1 adrenergic agonists to the stimulation of phosphoinositide lipid metabolism. This chain is Protein-glutamine gamma-glutamyltransferase 2, found in Gallus gallus (Chicken).